The primary structure comprises 591 residues: Phenylalanine--tRNA ligase beta subunit (591 aa).

The B5 domain maps to 304 to 380 (LSYREMTVTT…VAFGYNNLIT (77 aa)). Mg(2+)-binding residues include Asp358, Asp364, Glu367, and Asp368.

It belongs to the phenylalanyl-tRNA synthetase beta subunit family. Type 2 subfamily. In terms of assembly, tetramer of two alpha and two beta subunits. Mg(2+) serves as cofactor.

The protein resides in the cytoplasm. It catalyses the reaction tRNA(Phe) + L-phenylalanine + ATP = L-phenylalanyl-tRNA(Phe) + AMP + diphosphate + H(+). This is Phenylalanine--tRNA ligase beta subunit from Caenorhabditis elegans.